The primary structure comprises 543 residues: CTP synthase (543 aa).

The segment at Met1–Ile265 is amidoligase domain. Residue Ser13 participates in CTP binding. Position 13 (Ser13) interacts with UTP. Residues Ser14 to Ile19 and Asp71 contribute to the ATP site. Mg(2+) is bound by residues Asp71 and Glu139. CTP-binding positions include Asp146–Glu148, Lys186–Gln191, and Lys222. UTP contacts are provided by residues Lys186 to Gln191 and Lys222. The Glutamine amidotransferase type-1 domain occupies Glu290–Thr541. Gly351 provides a ligand contact to L-glutamine. The active-site Nucleophile; for glutamine hydrolysis is Cys378. Residues Leu379–Gln382, Glu402, and Arg469 each bind L-glutamine. Catalysis depends on residues His514 and Glu516.

Belongs to the CTP synthase family. As to quaternary structure, homotetramer.

The enzyme catalyses UTP + L-glutamine + ATP + H2O = CTP + L-glutamate + ADP + phosphate + 2 H(+). It carries out the reaction L-glutamine + H2O = L-glutamate + NH4(+). The catalysed reaction is UTP + NH4(+) + ATP = CTP + ADP + phosphate + 2 H(+). It participates in pyrimidine metabolism; CTP biosynthesis via de novo pathway; CTP from UDP: step 2/2. With respect to regulation, allosterically activated by GTP, when glutamine is the substrate; GTP has no effect on the reaction when ammonia is the substrate. The allosteric effector GTP functions by stabilizing the protein conformation that binds the tetrahedral intermediate(s) formed during glutamine hydrolysis. Inhibited by the product CTP, via allosteric rather than competitive inhibition. Its function is as follows. Catalyzes the ATP-dependent amination of UTP to CTP with either L-glutamine or ammonia as the source of nitrogen. Regulates intracellular CTP levels through interactions with the four ribonucleotide triphosphates. This is CTP synthase from Hydrogenovibrio crunogenus (strain DSM 25203 / XCL-2) (Thiomicrospira crunogena).